Here is a 245-residue protein sequence, read N- to C-terminus: Ribonuclease 3 (245 aa).

The RNase III domain maps to Ala19 to Gly144. Residue Glu57 participates in Mg(2+) binding. Residue Asp61 is part of the active site. Positions 130 and 133 each coordinate Mg(2+). Glu133 is an active-site residue. The DRBM domain occupies Asp169–Val238.

The protein belongs to the ribonuclease III family. Homodimer. Mg(2+) is required as a cofactor.

Its subcellular location is the cytoplasm. It carries out the reaction Endonucleolytic cleavage to 5'-phosphomonoester.. Functionally, digests double-stranded RNA. Involved in the processing of primary rRNA transcript to yield the immediate precursors to the large and small rRNAs (23S and 16S). Processes some mRNAs, and tRNAs when they are encoded in the rRNA operon. Processes pre-crRNA and tracrRNA of type II CRISPR loci if present in the organism. This chain is Ribonuclease 3, found in Brucella abortus (strain S19).